The sequence spans 137 residues: Large-conductance mechanosensitive channel (137 aa).

A run of 2 helical transmembrane segments spans residues 10–30 and 76–96; these read FAMR…AAFG and GVFI…FMAI.

This sequence belongs to the MscL family. In terms of assembly, homopentamer.

It is found in the cell inner membrane. Its function is as follows. Channel that opens in response to stretch forces in the membrane lipid bilayer. May participate in the regulation of osmotic pressure changes within the cell. The polypeptide is Large-conductance mechanosensitive channel (Enterobacter sp. (strain 638)).